The following is a 470-amino-acid chain: Argininosuccinate lyase (470 aa).

This sequence belongs to the lyase 1 family. Argininosuccinate lyase subfamily.

It is found in the cytoplasm. The enzyme catalyses 2-(N(omega)-L-arginino)succinate = fumarate + L-arginine. It functions in the pathway amino-acid biosynthesis; L-arginine biosynthesis; L-arginine from L-ornithine and carbamoyl phosphate: step 3/3. The polypeptide is Argininosuccinate lyase (Prochlorococcus marinus (strain MIT 9303)).